The primary structure comprises 134 residues: Putative pre-16S rRNA nuclease (134 aa).

The protein belongs to the YqgF nuclease family.

The protein localises to the cytoplasm. Could be a nuclease involved in processing of the 5'-end of pre-16S rRNA. The chain is Putative pre-16S rRNA nuclease from Helicobacter pylori (strain ATCC 700392 / 26695) (Campylobacter pylori).